The following is a 321-amino-acid chain: Glycerol-3-phosphate dehydrogenase [NAD(P)+] (321 aa).

The NADPH site is built by Ser-10, Trp-11, Arg-31, Arg-32, Tyr-47, and Lys-98. Sn-glycerol 3-phosphate contacts are provided by Lys-98, Gly-125, and Ser-127. NADPH is bound at residue Ala-129. Residues Lys-177, Asp-230, Ser-240, Arg-241, and Asn-242 each contribute to the sn-glycerol 3-phosphate site. Residue Lys-177 is the Proton acceptor of the active site. Arg-241 is a binding site for NADPH. Positions 265 and 267 each coordinate NADPH.

The protein belongs to the NAD-dependent glycerol-3-phosphate dehydrogenase family.

It is found in the cytoplasm. It carries out the reaction sn-glycerol 3-phosphate + NAD(+) = dihydroxyacetone phosphate + NADH + H(+). It catalyses the reaction sn-glycerol 3-phosphate + NADP(+) = dihydroxyacetone phosphate + NADPH + H(+). The protein operates within membrane lipid metabolism; glycerophospholipid metabolism. Its function is as follows. Catalyzes the reduction of the glycolytic intermediate dihydroxyacetone phosphate (DHAP) to sn-glycerol 3-phosphate (G3P), the key precursor for phospholipid synthesis. This Thermotoga sp. (strain RQ2) protein is Glycerol-3-phosphate dehydrogenase [NAD(P)+].